A 122-amino-acid polypeptide reads, in one-letter code: NADH-quinone oxidoreductase subunit A (122 aa).

3 consecutive transmembrane segments (helical) span residues 10 to 30 (MIVL…LTLG), 66 to 86 (IFAL…PWAV), and 91 to 111 (LGLF…VGLA).

Belongs to the complex I subunit 3 family. NDH-1 is composed of 14 different subunits. Subunits NuoA, H, J, K, L, M, N constitute the membrane sector of the complex.

The protein localises to the cell membrane. The enzyme catalyses a quinone + NADH + 5 H(+)(in) = a quinol + NAD(+) + 4 H(+)(out). In terms of biological role, NDH-1 shuttles electrons from NADH, via FMN and iron-sulfur (Fe-S) centers, to quinones in the respiratory chain. The immediate electron acceptor for the enzyme in this species is believed to be a menaquinone. Couples the redox reaction to proton translocation (for every two electrons transferred, four hydrogen ions are translocated across the cytoplasmic membrane), and thus conserves the redox energy in a proton gradient. This Bacillus anthracis protein is NADH-quinone oxidoreductase subunit A.